Consider the following 258-residue polypeptide: tRNA pseudouridine synthase A (258 aa).

Aspartate 52 (nucleophile) is an active-site residue. Tyrosine 110 is a substrate binding site.

This sequence belongs to the tRNA pseudouridine synthase TruA family. Homodimer.

It catalyses the reaction uridine(38/39/40) in tRNA = pseudouridine(38/39/40) in tRNA. Functionally, formation of pseudouridine at positions 38, 39 and 40 in the anticodon stem and loop of transfer RNAs. The protein is tRNA pseudouridine synthase A of Francisella tularensis subsp. tularensis (strain FSC 198).